Here is a 64-residue protein sequence, read N- to C-terminus: Large ribosomal subunit protein bL35 (64 aa).

Belongs to the bacterial ribosomal protein bL35 family.

The sequence is that of Large ribosomal subunit protein bL35 from Leifsonia xyli subsp. xyli (strain CTCB07).